Here is a 313-residue protein sequence, read N- to C-terminus: Olfactory receptor 10K1 (313 aa).

The Extracellular segment spans residues 1-25 (MEQVNKTVVREFVVLGFSSLARLQQ). N-linked (GlcNAc...) asparagine glycosylation is present at Asn5. Residues 26–46 (LLFVIFLLLYLFTLGTNAIII) form a helical membrane-spanning segment. Residues 47-54 (STIVLDRA) are Cytoplasmic-facing. The chain crosses the membrane as a helical span at residues 55 to 75 (LHTPMYFFLAILSCSEICYTF). Topologically, residues 76–99 (VIVPKMLVDLLSQKKTISFLGCAI) are extracellular. A helical membrane pass occupies residues 100 to 120 (QMFSFLFFGSSHSFLLAAMGY). Residues 121-139 (DRYMAICNPLRYSVLMGHG) lie on the Cytoplasmic side of the membrane. A helical transmembrane segment spans residues 140 to 160 (VCMGLMAAACACGFTVSLVTT). Residues 161 to 197 (SLVFHLPFHSSNQLHHFFCDISPVLKLASQHSGFSQL) are Extracellular-facing. The chain crosses the membrane as a helical span at residues 198–217 (VIFMLGVFALVIPLLLILVS). Residues 218–237 (YIRIISAILKIPSSVGRYKT) lie on the Cytoplasmic side of the membrane. A helical membrane pass occupies residues 238–258 (FSTCASHLIVVTVHYSCASFI). Residues 259–271 (YLRPKTNYTSSQD) are Extracellular-facing. N-linked (GlcNAc...) asparagine glycosylation occurs at Asn265. The helical transmembrane segment at 272 to 292 (TLISVSYTILTPLFNPMIYSL) threads the bilayer. Residues 293 to 313 (RNKEFKSALRRTIGQTFYPLS) lie on the Cytoplasmic side of the membrane.

It belongs to the G-protein coupled receptor 1 family.

It is found in the cell membrane. Odorant receptor. The polypeptide is Olfactory receptor 10K1 (OR10K1) (Homo sapiens (Human)).